The following is a 476-amino-acid chain: MAAAAAGGAPGPAPGPSRPAPAARNPPAVPRRRGDSRRRQAALFFLNNISLDGRPPSLGPGGEKPAPPPPPPTEAREAPAPPPAPPGGLPGLPARPAPQGLLSPTTAPAGLGLDGQRQRRRVTSQRCSLEFLEDTVGCASVQRTKHASGSPRHKGLKKTHFIKNMRQYDTKNSRIVLICAKRSLCAAFSVLPYGEGLRISDLRVDSQKQRHPSGGVSVSSEMVFELEGVELGADGKVVSYAKFLYPTNALVIHKNDSHGLLPQPRPSIPRAPPGSRHKPVPTKSTPAGTELGSDGGDAVEYNPNLLDDPQWPCGKHKRVLIFASYMTTVIEYVKPADLKKDMNETFREKFPHIKLTLSKIRSLKREMRNLSEECSLEPVTVSMAYVYFEKLVLQGKLNKQNRKLCAGACVLLAAKISSDLRKSEVKQLIDKLEERFRFNRKDLIGFEFTVLVALELALYLPENQVLPHYRRLTQQF.

The segment at 1–119 (MAAAAAGGAP…GLGLDGQRQR (119 aa)) is disordered. Positions 30 to 40 (PRRRGDSRRRQ) are enriched in basic residues. The span at 65 to 96 (PAPPPPPPTEAREAPAPPPAPPGGLPGLPARP) shows a compositional bias: pro residues. Residues serine 128 and serine 206 each carry the phosphoserine modification. The segment at 256 to 295 (DSHGLLPQPRPSIPRAPPGSRHKPVPTKSTPAGTELGSDG) is disordered. Over residues 263 to 272 (QPRPSIPRAP) the composition is skewed to pro residues.

The protein belongs to the cyclin family. In terms of assembly, binds to CDK3, CDK5 and ABL1. The C-terminal cyclin-box-like region binds to CDK5. In terms of tissue distribution, widely expressed.

In terms of biological role, unknown. Probably involved in G1-S cell cycle transition. The sequence is that of CDK5 and ABL1 enzyme substrate 2 (Cables2) from Mus musculus (Mouse).